Reading from the N-terminus, the 210-residue chain is T-cell antigen CD7 (210 aa).

A signal peptide spans 1 to 23 (MTQQAVLALLLTLAGILPGPLDA). One can recognise an Ig-like domain in the interval 24-129 (QDVHQSPRLT…RGLFTTVVVK (106 aa)). Topologically, residues 24-150 (QDVHQSPRLT…EPLQTSFSFP (127 aa)) are extracellular. 3 N-linked (GlcNAc...) asparagine glycosylation sites follow: Asn-42, Asn-86, and Asn-93. Residues Cys-45 and Cys-111 are joined by a disulfide bond. Residues 151–171 (AAIAVGFFFTGLLLGVVCSML) form a helical membrane-spanning segment. Residue Cys-168 is the site of S-palmitoyl cysteine attachment. The Cytoplasmic segment spans residues 172-210 (RKIQIKKLCASGIKESPCVVYEDMSYSNRKTPCIPNQYQ).

As to quaternary structure, interacts with SECTM1.

The protein localises to the membrane. In terms of biological role, transmembrane glycoprotein expressed by T-cells and natural killer (NK) cells and their precursors. Plays a costimulatory role in T-cell activation upon binding to its ligand K12/SECTM1. In turn, mediates the production of cytokines such as IL-2. On resting NK-cells, CD7 activation results in a significant induction of gamma-interferon levels. The protein is T-cell antigen CD7 (Cd7) of Mus musculus (Mouse).